Here is a 443-residue protein sequence, read N- to C-terminus: MSTFIGQLIGFAVIVFLLVRFVVPPVRRMMTAQQETVRRQLEESSTAANKVAQADQQHAKAVEEAKADARRVVDEARSDAEKIAEQMRAQADAEVERIKVQGQAQVQLLRQQLIRELRSHLGTESVARARELVRDHVSDDDNRSATVDRFLDELDAMAPSDAALDDAVGSRMRSTSRESLKALVSRFDELTADVDADGLTSLGDELAAVAKLLKTEPVLGKHFGEPTEDGEGKANLAEAVLSGKISDTALEVVKAAVAQRWSDESDLDYAVRHTARLALLVRAERNDETSEVEDQLFRFSRILDSESRLSGVLSDYTTPVDGRIGLLDRLLGDQAGETTRALLAQTVELLRGERADEAVRELAELAVARRGEVVAHVNAAAELSDAQRTRLAEVLGRIYGRPASLQLHIDPDMLGGLTIAVGDEVIDGSLASRLASAETQLPD.

The segment at 1–168 (MSTFIGQLIG…PSDAALDDAV (168 aa)) is ATP synthase subunit b. Residues 4–24 (FIGQLIGFAVIVFLLVRFVVP) form a helical membrane-spanning segment. Residues 169–443 (GSRMRSTSRE…LASAETQLPD (275 aa)) are ATP synthase subunit delta.

The protein in the N-terminal section; belongs to the ATPase B chain family. This sequence in the C-terminal section; belongs to the ATPase delta chain family. In terms of assembly, F-type ATPases have 2 components, F(1) - the catalytic core - and F(0) - the membrane proton channel. F(1) has five subunits: alpha(3), beta(3), gamma(1), delta(1), epsilon(1). F(0) has three main subunits: a(1), b(2) and c(10-14). The alpha and beta chains form an alternating ring which encloses part of the gamma chain. F(1) is attached to F(0) by a central stalk formed by the gamma and epsilon chains, while a peripheral stalk is formed by the delta and b chains.

It is found in the cell membrane. In terms of biological role, f(1)F(0) ATP synthase produces ATP from ADP in the presence of a proton or sodium gradient. F-type ATPases consist of two structural domains, F(1) containing the extramembraneous catalytic core and F(0) containing the membrane proton channel, linked together by a central stalk and a peripheral stalk. During catalysis, ATP synthesis in the catalytic domain of F(1) is coupled via a rotary mechanism of the central stalk subunits to proton translocation. Its function is as follows. This fusion protein includes a component of the F(0) channel (subunit b) and of the F(1) subunit (subunit delta). Two copies of subunit b and one of delta together form the peripheral 'stator' stalk which links F(1) to F(0). The chain is ATP synthase subunit b-delta (atpFH) from Mycobacterium sp. (strain JLS).